Reading from the N-terminus, the 371-residue chain is tRNA N6-adenosine threonylcarbamoyltransferase (371 aa).

The Fe cation site is built by His110 and His114. Substrate contacts are provided by residues 132–136 (LVSGG), Asp165, Gly178, Asp182, and Asn289. Fe cation is bound at residue Asp317.

This sequence belongs to the KAE1 / TsaD family. Fe(2+) serves as cofactor.

The protein resides in the cytoplasm. The enzyme catalyses L-threonylcarbamoyladenylate + adenosine(37) in tRNA = N(6)-L-threonylcarbamoyladenosine(37) in tRNA + AMP + H(+). In terms of biological role, required for the formation of a threonylcarbamoyl group on adenosine at position 37 (t(6)A37) in tRNAs that read codons beginning with adenine. Is involved in the transfer of the threonylcarbamoyl moiety of threonylcarbamoyl-AMP (TC-AMP) to the N6 group of A37, together with TsaE and TsaB. TsaD likely plays a direct catalytic role in this reaction. The polypeptide is tRNA N6-adenosine threonylcarbamoyltransferase (Solidesulfovibrio magneticus (strain ATCC 700980 / DSM 13731 / RS-1) (Desulfovibrio magneticus)).